A 307-amino-acid chain; its full sequence is Thiosulfate dehydrogenase (307 aa).

An N-terminal signal peptide occupies residues 1–20 (MNTQLLVTLLAMSIGGVALA). 2 consecutive Cytochrome c domains span residues 59–156 (ELVQ…YWLS) and 180–265 (FDIA…NSHE). Heme c contacts are provided by C85, C88, H89, C193, C196, and H197.

As to quaternary structure, monomer. Binds 2 heme c groups covalently per subunit.

The protein localises to the periplasm. It carries out the reaction 2 thiosulfate + 2 Fe(III)-[cytochrome c] = tetrathionate + 2 Fe(II)-[cytochrome c] + 2 H(+). Its function is as follows. Catalyzes the oxidation of 2 molecules of thiosulfate to tetrathionate, using TsdB as an electron acceptor. The protein is Thiosulfate dehydrogenase (tsdA) of Stutzerimonas stutzeri (strain A1501) (Pseudomonas stutzeri).